The following is a 524-amino-acid chain: mRNA cap guanine-N(7) methyltransferase (524 aa).

A disordered region spans residues Met-1–Glu-155. The segment covering Asn-19 to Ile-40 has biased composition (basic and acidic residues). Residues Asn-68–Asn-77 are compositionally biased toward polar residues. Over residues Lys-90–Gly-99 the composition is skewed to basic and acidic residues. Over residues Ser-100–Val-112 the composition is skewed to polar residues. In terms of domain architecture, mRNA cap 0 methyltransferase spans Ser-214 to Leu-522. Asn-223–Asn-224 lines the mRNA pocket. Positions 227, 251, 273, 319, 349, and 354 each coordinate S-adenosyl-L-methionine.

The protein belongs to the class I-like SAM-binding methyltransferase superfamily. mRNA cap 0 methyltransferase family.

It is found in the nucleus. It catalyses the reaction a 5'-end (5'-triphosphoguanosine)-ribonucleoside in mRNA + S-adenosyl-L-methionine = a 5'-end (N(7)-methyl 5'-triphosphoguanosine)-ribonucleoside in mRNA + S-adenosyl-L-homocysteine. In terms of biological role, responsible for methylating the 5'-cap structure of mRNAs. The chain is mRNA cap guanine-N(7) methyltransferase (ABD1) from Debaryomyces hansenii (strain ATCC 36239 / CBS 767 / BCRC 21394 / JCM 1990 / NBRC 0083 / IGC 2968) (Yeast).